The primary structure comprises 1230 residues: MATKFTKNQQRAIEEKGHNILVAASAGSGKTTVLIERLIQKILSGVSVEKFLIVTFTNAAAKEMRERLEVAIEKRLKVADESQKRFLQEQLLILPAANISTIDAYALRIIEMYYHIIGLDPQFRLLSDTAERKLLQQDVLTDVLADFYDENNIHHEQFLTLVNNFGNPNQDDQLQKIILKLSDFAEARADGNEWLEKLREPYEVTGEPLTATALYVRSIRPIILEIIKNLIKKVEEVQLTITGIDELKKTQDAFLEIQDYLLLIQDKAMVAPWDELREAILDTPSGKINSQTKAIKEDPDLSATLEVARQIKGQVVGVKSQMNSLITSYFALDEKSWQLVQKESYKLIDTLILVTQAFRESFRRTKREEKLLDFPDLGTLALAILSDDVTKQTIQGQFDEILVDEYQDINQLQETLLTSVSNGHNMYMVGDVKQSIYGFRQAEPSLFTNKYKQFAKKESDDIRIDLADNFRSQNNVTNITNLIFTQIMDETLGDIAYAGEAKLVPKAAYPDDVPAVFHMDIIVEDAEEDLETDTEVFEKRQAQYALLAERILKLRETSIFDRKADPAGLRPVEYSDIAILTRAKSGYIDLVSTLRAAGIPVQVEGVGNYFQTMEVYLMLDILRVIDNPHQDIPLAAVLRSPVFNFDENELAAIRIADKMHDYWTALQAYAQQDQKAQNFLNLIEKWHAIATQNDLVALIWAIYDDTAWLDYVAGMPGGAQRQANLHALYEYARTYQNNTHSGLFRFIRYIEQLQSGDSDLGEAAQETDAQAVRIMTIHASKGLEFPIVFLPEFDKSFNTQDLKGGLLIQKNEGIGVEYIQPDALVMIPTLQKLVVQQALKRQSWSEEMRLLYVALTRAEQQLYIVGSVKVKGEAGNQSLKSLWQQSKNANGQFLPEFLRLQADSYLKWTIMSLARTKNKVLEDWLGDGQLPRLVGSETPLTGKVAVTLTNQNEIHAPIASTKGSELVEDGTYSPMDFDRAKTILNYQYANLQATQTAAYQSVSEIKQIFEDPDLAQMQTAVITENGQLQPANVLKVDELPLPDFMNDGSQKPSSSAVGTATHLILQLIDFTKINTVQSIEKLRDELVENKRILPSVAPLIEIDEILAFLQSDFAKQIIAHQKTLHREATFAMIMPANDIYDTLEDSAPVLIHGIIDGYFVDEASQTITLFDYKTDFVRNAQIDEDLTKLQARYKGQLHLYQQALQREYVGYQVGDPQLIALNVGRVISVK.

In terms of domain architecture, UvrD-like helicase ATP-binding spans 3–473; it reads TKFTKNQQRA…IDLADNFRSQ (471 aa). 24–31 contacts ATP; the sequence is ASAGSGKT. In terms of domain architecture, UvrD-like helicase C-terminal spans 500–782; that stretch reads EAKLVPKAAY…RIMTIHASKG (283 aa).

Belongs to the helicase family. AddA subfamily. Heterodimer of AddA and AddB/RexB. The cofactor is Mg(2+).

It carries out the reaction Couples ATP hydrolysis with the unwinding of duplex DNA by translocating in the 3'-5' direction.. The catalysed reaction is ATP + H2O = ADP + phosphate + H(+). The heterodimer acts as both an ATP-dependent DNA helicase and an ATP-dependent, dual-direction single-stranded exonuclease. Recognizes the chi site generating a DNA molecule suitable for the initiation of homologous recombination. The AddA nuclease domain is required for chi fragment generation; this subunit has the helicase and 3' -&gt; 5' nuclease activities. The protein is ATP-dependent helicase/nuclease subunit A of Leuconostoc mesenteroides subsp. mesenteroides (strain ATCC 8293 / DSM 20343 / BCRC 11652 / CCM 1803 / JCM 6124 / NCDO 523 / NBRC 100496 / NCIMB 8023 / NCTC 12954 / NRRL B-1118 / 37Y).